Reading from the N-terminus, the 149-residue chain is Arginine repressor (149 aa).

The protein belongs to the ArgR family.

It localises to the cytoplasm. It functions in the pathway amino-acid biosynthesis; L-arginine biosynthesis [regulation]. In terms of biological role, regulates arginine biosynthesis genes. This chain is Arginine repressor, found in Alkaliphilus metalliredigens (strain QYMF).